A 439-amino-acid chain; its full sequence is Actin-related protein 3 (439 aa).

Residues 40-71 are disordered; it reads PSAGTGGSGSGRPAVANKPSFLTGGAGPGGHL.

Belongs to the actin family. ARP3 subfamily. Component of the Arp2/3 complex composed.

It is found in the cytoplasm. It localises to the cytoskeleton. In terms of biological role, functions as ATP-binding component of the Arp2/3 complex which is involved in regulation of actin polymerization and together with an activating nucleation-promoting factor (NPF) mediates the formation of branched actin networks. Seems to contact the pointed end of the daughter actin filament. This is Actin-related protein 3 (arp-3) from Neurospora crassa (strain ATCC 24698 / 74-OR23-1A / CBS 708.71 / DSM 1257 / FGSC 987).